The following is a 547-amino-acid chain: T-complex protein 1 subunit alpha (547 aa).

This sequence belongs to the TCP-1 chaperonin family. In terms of assembly, heterooligomeric complex of about 850 to 900 kDa that forms two stacked rings, 12 to 16 nm in diameter.

The protein localises to the cytoplasm. Functionally, molecular chaperone; assists the folding of proteins upon ATP hydrolysis. Known to play a role, in vitro, in the folding of actin and tubulin. The protein is T-complex protein 1 subunit alpha of Tetrahymena pyriformis.